We begin with the raw amino-acid sequence, 331 residues long: Glyceraldehyde-3-phosphate dehydrogenase (331 aa).

NAD(+)-binding positions include 10 to 11, D31, K75, and T117; that span reads RI. D-glyceraldehyde 3-phosphate is bound by residues 148–150 and T179; that span reads SCT. C149 functions as the Nucleophile in the catalytic mechanism. An NAD(+)-binding site is contributed by N180. D-glyceraldehyde 3-phosphate is bound by residues R194, 207-208, and R230; that span reads TG. N311 is a binding site for NAD(+).

It belongs to the glyceraldehyde-3-phosphate dehydrogenase family. Homotetramer.

It is found in the cytoplasm. The enzyme catalyses D-glyceraldehyde 3-phosphate + phosphate + NAD(+) = (2R)-3-phospho-glyceroyl phosphate + NADH + H(+). It participates in carbohydrate degradation; glycolysis; pyruvate from D-glyceraldehyde 3-phosphate: step 1/5. Catalyzes the oxidative phosphorylation of glyceraldehyde 3-phosphate (G3P) to 1,3-bisphosphoglycerate (BPG) using the cofactor NAD. The first reaction step involves the formation of a hemiacetal intermediate between G3P and a cysteine residue, and this hemiacetal intermediate is then oxidized to a thioester, with concomitant reduction of NAD to NADH. The reduced NADH is then exchanged with the second NAD, and the thioester is attacked by a nucleophilic inorganic phosphate to produce BPG. This chain is Glyceraldehyde-3-phosphate dehydrogenase (gap), found in Thermus aquaticus.